Consider the following 278-residue polypeptide: Probable esterase TOX9 (278 aa).

Residues S119, D222, and H250 each act as charge relay system in the active site.

It belongs to the LovG family.

Its pathway is mycotoxin biosynthesis. Functionally, probable esterase; part of the Tox1A locus, one of the 2 loci that mediate the biosynthesis of T-toxin, a family of linear polyketides 37 to 45 carbons in length, of which the major component is 41 carbons, and which leads to high virulence to maize. One of the PKSs (PKS1 or PKS2) could synthesize a precursor, used subsequently by the other PKS as starter unit, to add additional carbons. Variability in the length of the final carbon backbone C35-47 could be achieved by varying the number of condensation cycles, or use of different starter or extender units or might be due to decarboxylation of the penultimate product, catalyzed by DEC1. Additional proteins are required for the biosynthesis of T-toxin, including oxidoreductases RED1, RED2, RED3, LAM1 and OXI1, as well as esterase TOX9. This chain is Probable esterase TOX9, found in Cochliobolus heterostrophus (strain C4 / ATCC 48331 / race T) (Southern corn leaf blight fungus).